The sequence spans 1579 residues: Pentafunctional AROM polypeptide (1579 aa).

Positions methionine 1–aspartate 383 are 3-dehydroquinate synthase. NAD(+) contacts are provided by residues aspartate 40–asparagine 42, glutamate 75–lysine 78, glycine 106–isoleucine 108, and aspartate 111. Arginine 122 lines the 7-phospho-2-dehydro-3-deoxy-D-arabino-heptonate pocket. Threonine 131–serine 132 contributes to the NAD(+) binding site. 7-phospho-2-dehydro-3-deoxy-D-arabino-heptonate-binding residues include aspartate 138 and lysine 144. Lysine 153 serves as a coordination point for NAD(+). Asparagine 154 is a 7-phospho-2-dehydro-3-deoxy-D-arabino-heptonate binding site. NAD(+)-binding positions include tryptophan 171–serine 174 and asparagine 182. Glutamate 186 contributes to the Zn(2+) binding site. 7-phospho-2-dehydro-3-deoxy-D-arabino-heptonate contacts are provided by residues glutamate 186–lysine 189 and lysine 249. Catalysis depends on glutamate 259, which acts as the Proton acceptor; for 3-dehydroquinate synthase activity. 7-phospho-2-dehydro-3-deoxy-D-arabino-heptonate-binding positions include arginine 263–asparagine 267 and histidine 270. Residue histidine 270 coordinates Zn(2+). The Proton acceptor; for 3-dehydroquinate synthase activity role is filled by histidine 274. 7-phospho-2-dehydro-3-deoxy-D-arabino-heptonate-binding residues include histidine 286 and lysine 355. Histidine 286 provides a ligand contact to Zn(2+). Positions valine 396–alanine 862 are EPSP synthase. The active-site For EPSP synthase activity is the cysteine 844. Positions serine 881–cysteine 1071 are shikimate kinase. Glycine 886 to threonine 893 is a binding site for ATP. Residues leucine 1072–glutamate 1284 are 3-dehydroquinase. Catalysis depends on histidine 1189, which acts as the Proton acceptor; for 3-dehydroquinate dehydratase activity. Lysine 1218 (schiff-base intermediate with substrate; for 3-dehydroquinate dehydratase activity) is an active-site residue. A shikimate dehydrogenase region spans residues lysine 1297–isoleucine 1579.

It in the N-terminal section; belongs to the sugar phosphate cyclases superfamily. Dehydroquinate synthase family. The protein in the 2nd section; belongs to the EPSP synthase family. This sequence in the 3rd section; belongs to the shikimate kinase family. In the 4th section; belongs to the type-I 3-dehydroquinase family. It in the C-terminal section; belongs to the shikimate dehydrogenase family. In terms of assembly, homodimer. Zn(2+) serves as cofactor.

It is found in the cytoplasm. The enzyme catalyses 7-phospho-2-dehydro-3-deoxy-D-arabino-heptonate = 3-dehydroquinate + phosphate. The catalysed reaction is 3-dehydroquinate = 3-dehydroshikimate + H2O. It carries out the reaction shikimate + NADP(+) = 3-dehydroshikimate + NADPH + H(+). It catalyses the reaction shikimate + ATP = 3-phosphoshikimate + ADP + H(+). The enzyme catalyses 3-phosphoshikimate + phosphoenolpyruvate = 5-O-(1-carboxyvinyl)-3-phosphoshikimate + phosphate. The protein operates within metabolic intermediate biosynthesis; chorismate biosynthesis; chorismate from D-erythrose 4-phosphate and phosphoenolpyruvate: step 2/7. It functions in the pathway metabolic intermediate biosynthesis; chorismate biosynthesis; chorismate from D-erythrose 4-phosphate and phosphoenolpyruvate: step 3/7. Its pathway is metabolic intermediate biosynthesis; chorismate biosynthesis; chorismate from D-erythrose 4-phosphate and phosphoenolpyruvate: step 4/7. It participates in metabolic intermediate biosynthesis; chorismate biosynthesis; chorismate from D-erythrose 4-phosphate and phosphoenolpyruvate: step 5/7. The protein operates within metabolic intermediate biosynthesis; chorismate biosynthesis; chorismate from D-erythrose 4-phosphate and phosphoenolpyruvate: step 6/7. The AROM polypeptide catalyzes 5 consecutive enzymatic reactions in prechorismate polyaromatic amino acid biosynthesis. This is Pentafunctional AROM polypeptide from Candida glabrata (strain ATCC 2001 / BCRC 20586 / JCM 3761 / NBRC 0622 / NRRL Y-65 / CBS 138) (Yeast).